The sequence spans 158 residues: MIILGIDPGLARVGYGLIDCNMTQKKMLDCGIIKTSQDHNDGERMVEITRDLRYLINKWKPQIASVEKFFFYRSSTTIKVVQARGVVIMTLARFRVPILEFPPMQIKLAVTGSGKANKDEVSMAVIRELDLSKPPRPDDASDALAIALTAYYQQRIVK.

Residues aspartate 7, glutamate 67, and aspartate 139 contribute to the active site. Mg(2+) is bound by residues aspartate 7, glutamate 67, and aspartate 139.

Belongs to the RuvC family. Homodimer which binds Holliday junction (HJ) DNA. The HJ becomes 2-fold symmetrical on binding to RuvC with unstacked arms; it has a different conformation from HJ DNA in complex with RuvA. In the full resolvosome a probable DNA-RuvA(4)-RuvB(12)-RuvC(2) complex forms which resolves the HJ. The cofactor is Mg(2+).

The protein localises to the cytoplasm. It catalyses the reaction Endonucleolytic cleavage at a junction such as a reciprocal single-stranded crossover between two homologous DNA duplexes (Holliday junction).. Its function is as follows. The RuvA-RuvB-RuvC complex processes Holliday junction (HJ) DNA during genetic recombination and DNA repair. Endonuclease that resolves HJ intermediates. Cleaves cruciform DNA by making single-stranded nicks across the HJ at symmetrical positions within the homologous arms, yielding a 5'-phosphate and a 3'-hydroxyl group; requires a central core of homology in the junction. The consensus cleavage sequence is 5'-(A/T)TT(C/G)-3'. Cleavage occurs on the 3'-side of the TT dinucleotide at the point of strand exchange. HJ branch migration catalyzed by RuvA-RuvB allows RuvC to scan DNA until it finds its consensus sequence, where it cleaves and resolves the cruciform DNA. This chain is Crossover junction endodeoxyribonuclease RuvC, found in Prochlorococcus marinus (strain MIT 9211).